The sequence spans 274 residues: Orotidine 5'-phosphate decarboxylase (274 aa).

K95 (proton donor) is an active-site residue.

Belongs to the OMP decarboxylase family. Type 2 subfamily.

It catalyses the reaction orotidine 5'-phosphate + H(+) = UMP + CO2. It functions in the pathway pyrimidine metabolism; UMP biosynthesis via de novo pathway; UMP from orotate: step 2/2. This Mycobacterium bovis (strain ATCC BAA-935 / AF2122/97) protein is Orotidine 5'-phosphate decarboxylase (pyrF).